A 381-amino-acid polypeptide reads, in one-letter code: Alkanesulfonate monooxygenase (381 aa).

It belongs to the SsuD family. In terms of assembly, homotetramer.

The catalysed reaction is an alkanesulfonate + FMNH2 + O2 = an aldehyde + FMN + sulfite + H2O + 2 H(+). In terms of biological role, catalyzes the desulfonation of aliphatic sulfonates. This chain is Alkanesulfonate monooxygenase, found in Escherichia coli O6:K15:H31 (strain 536 / UPEC).